We begin with the raw amino-acid sequence, 163 residues long: Single-stranded DNA-binding protein 2 (163 aa).

The 104-residue stretch at 1-104 (MINNVVLVGR…VVADNFQMLE (104 aa)) folds into the SSB domain. A disordered region spans residues 109-163 (REGGSTGSFNGGFNNNTSSSNSYSAPAQQTPNFGRDDSPFGNSNPMDISDDDLPF). The span at 119-130 (GGFNNNTSSSNS) shows a compositional bias: low complexity. A compositionally biased stretch (polar residues) spans 131–140 (YSAPAQQTPN). The short motif at 158–163 (DDDLPF) is the Important for interaction with partner proteins element.

As to quaternary structure, homotetramer.

Plays an important role in DNA replication, recombination and repair. Binds to ssDNA and to an array of partner proteins to recruit them to their sites of action during DNA metabolism. In Streptococcus pyogenes serotype M6 (strain ATCC BAA-946 / MGAS10394), this protein is Single-stranded DNA-binding protein 2 (ssb2).